Reading from the N-terminus, the 452-residue chain is MSRDTIVAQATPIGRGGVGILRVSGPLAQQVAEQVLGKTLTPRMANYLPFKDSDGTVLDQGIALYFKAPNSFTGEDVLELQGHGGQIVMDLLLKRILQIDGIRLARPGEFSEQAFLNDKLDLAQAEAIADLIEASSEQAARSALKSLQGEFSNKINELVDSVIYLRTYVEAAIDFPDEEIDFLADGKIETHLREIIAKLAKVKNEAKQGAILREGMKVVIAGRPNAGKSSLLNTLAGREAAIVTDIAGTTRDVLREHIHIDGMPLHIIDTAGLRDATDEVEKIGIRRAWDEIEQADRILLILDSTENQVELDLVQSEFMAKLPPHIPLTIVRNKADLSGEAEVLDEQNGLAVISLSAKTQKGVDLLRQHLKQSMGYQVCTEGGFLARRRHLEALEQADIHLQAGLIQLTEFYAGELVAEELRIAQHHLSEITGQFTSDDLLGNIFSSFCIGK.

(6S)-5-formyl-5,6,7,8-tetrahydrofolate is bound by residues arginine 22, glutamate 79, and lysine 119. Positions 215–375 (GMKVVIAGRP…LRQHLKQSMG (161 aa)) constitute a TrmE-type G domain. Asparagine 225 provides a ligand contact to K(+). GTP-binding positions include 225–230 (NAGKSS), 244–250 (TDIAGTT), 269–272 (DTAG), and 333–336 (NKAD). Residue serine 229 participates in Mg(2+) binding. K(+) contacts are provided by threonine 244, isoleucine 246, and threonine 249. Position 250 (threonine 250) interacts with Mg(2+). Position 452 (lysine 452) interacts with (6S)-5-formyl-5,6,7,8-tetrahydrofolate.

The protein belongs to the TRAFAC class TrmE-Era-EngA-EngB-Septin-like GTPase superfamily. TrmE GTPase family. Homodimer. Heterotetramer of two MnmE and two MnmG subunits. K(+) is required as a cofactor.

It is found in the cytoplasm. Exhibits a very high intrinsic GTPase hydrolysis rate. Involved in the addition of a carboxymethylaminomethyl (cmnm) group at the wobble position (U34) of certain tRNAs, forming tRNA-cmnm(5)s(2)U34. The chain is tRNA modification GTPase MnmE from Histophilus somni (strain 129Pt) (Haemophilus somnus).